We begin with the raw amino-acid sequence, 665 residues long: tRNA 5-methylaminomethyl-2-thiouridine biosynthesis bifunctional protein MnmC (665 aa).

The tRNA (mnm(5)s(2)U34)-methyltransferase stretch occupies residues 1 to 243 (MSQTSLHHAR…KREMLAGERA (243 aa)). The tract at residues 268–665 (IGGGIASAMT…RKLLKGKPLQ (398 aa)) is FAD-dependent cmnm(5)s(2)U34 oxidoreductase.

The protein in the N-terminal section; belongs to the methyltransferase superfamily. tRNA (mnm(5)s(2)U34)-methyltransferase family. In the C-terminal section; belongs to the DAO family. FAD is required as a cofactor.

The protein localises to the cytoplasm. The catalysed reaction is 5-aminomethyl-2-thiouridine(34) in tRNA + S-adenosyl-L-methionine = 5-methylaminomethyl-2-thiouridine(34) in tRNA + S-adenosyl-L-homocysteine + H(+). Functionally, catalyzes the last two steps in the biosynthesis of 5-methylaminomethyl-2-thiouridine (mnm(5)s(2)U) at the wobble position (U34) in tRNA. Catalyzes the FAD-dependent demodification of cmnm(5)s(2)U34 to nm(5)s(2)U34, followed by the transfer of a methyl group from S-adenosyl-L-methionine to nm(5)s(2)U34, to form mnm(5)s(2)U34. This chain is tRNA 5-methylaminomethyl-2-thiouridine biosynthesis bifunctional protein MnmC, found in Aeromonas hydrophila subsp. hydrophila (strain ATCC 7966 / DSM 30187 / BCRC 13018 / CCUG 14551 / JCM 1027 / KCTC 2358 / NCIMB 9240 / NCTC 8049).